Here is a 330-residue protein sequence, read N- to C-terminus: 1-aminocyclopropane-1-carboxylate oxidase 2 (330 aa).

Residues 153–253 (PNFGTKVSNY…RMSIASFYNP (101 aa)) form the Fe2OG dioxygenase domain. 3 residues coordinate Fe cation: His177, Asp179, and His234.

It belongs to the iron/ascorbate-dependent oxidoreductase family. As to quaternary structure, monomer. Fe cation serves as cofactor.

The catalysed reaction is 1-aminocyclopropane-1-carboxylate + L-ascorbate + O2 = ethene + L-dehydroascorbate + hydrogen cyanide + CO2 + 2 H2O. Its pathway is alkene biosynthesis; ethylene biosynthesis via S-adenosyl-L-methionine; ethylene from S-adenosyl-L-methionine: step 2/2. This is 1-aminocyclopropane-1-carboxylate oxidase 2 (ACO2) from Malus domestica (Apple).